The following is a 601-amino-acid chain: Glutamyl-tRNA(Gln) amidotransferase subunit B, mitochondrial (601 aa).

The transit peptide at 1–55 (MLRPWLRQCPRATRSLACPQCHLPRPQTARRALRPLPALSLSHPIRSLQTTTTES) directs the protein to the mitochondrion.

The protein belongs to the GatB/GatE family. GatB subfamily. In terms of assembly, subunit of the heterotrimeric GatCAB amidotransferase (AdT) complex, composed of A, B and C subunits.

The protein resides in the mitochondrion. It catalyses the reaction L-glutamyl-tRNA(Gln) + L-glutamine + ATP + H2O = L-glutaminyl-tRNA(Gln) + L-glutamate + ADP + phosphate + H(+). In terms of biological role, allows the formation of correctly charged Gln-tRNA(Gln) through the transamidation of misacylated Glu-tRNA(Gln) in the mitochondria. The reaction takes place in the presence of glutamine and ATP through an activated gamma-phospho-Glu-tRNA(Gln). The chain is Glutamyl-tRNA(Gln) amidotransferase subunit B, mitochondrial from Aspergillus niger (strain ATCC MYA-4892 / CBS 513.88 / FGSC A1513).